A 265-amino-acid chain; its full sequence is Glutamate racemase (265 aa).

Residues 13 to 14 (DS) and 45 to 46 (YG) each bind substrate. The Proton donor/acceptor role is filled by Cys-77. Substrate is bound at residue 78 to 79 (NT). Residue Cys-185 is the Proton donor/acceptor of the active site. A substrate-binding site is contributed by 186–187 (TH).

This sequence belongs to the aspartate/glutamate racemases family.

It carries out the reaction L-glutamate = D-glutamate. It functions in the pathway cell wall biogenesis; peptidoglycan biosynthesis. Functionally, provides the (R)-glutamate required for cell wall biosynthesis. This is Glutamate racemase from Vibrio cholerae serotype O1 (strain ATCC 39315 / El Tor Inaba N16961).